Here is a 101-residue protein sequence, read N- to C-terminus: Large ribosomal subunit protein uL24 (101 aa).

It belongs to the universal ribosomal protein uL24 family. In terms of assembly, part of the 50S ribosomal subunit.

One of two assembly initiator proteins, it binds directly to the 5'-end of the 23S rRNA, where it nucleates assembly of the 50S subunit. In terms of biological role, one of the proteins that surrounds the polypeptide exit tunnel on the outside of the subunit. This chain is Large ribosomal subunit protein uL24, found in Streptococcus mutans serotype c (strain ATCC 700610 / UA159).